We begin with the raw amino-acid sequence, 134 residues long: Small ribosomal subunit protein uS9 (134 aa).

Residues aspartate 109–arginine 134 are disordered. Residues proline 118–arginine 134 show a composition bias toward basic residues.

The protein belongs to the universal ribosomal protein uS9 family.

The chain is Small ribosomal subunit protein uS9 from Methanococcus maripaludis (strain DSM 14266 / JCM 13030 / NBRC 101832 / S2 / LL).